The following is a 770-amino-acid chain: Transducin-like enhancer protein 1 (770 aa).

The tract at residues 1–131 (MFPQSRHPTP…IIGQQQLQAQ (131 aa)) is q domain. Disordered stretches follow at residues 128 to 157 (LQAQ…GIPP) and 176 to 346 (HLAI…PAME). The segment at 132-199 (HLSHGHGPPV…RHRDRESGTS (68 aa)) is GP domain. Positions 146–157 (HPSGLQPPGIPP) are enriched in low complexity. Basic and acidic residues-rich tracts occupy residues 178–196 (AIKD…DRES) and 209–244 (RSTD…KSDD). The interval 200 to 266 (NSLLVPDSLR…SPHASPTHSP (67 aa)) is ccN domain. The short motif at 225 to 228 (KKRK) is the Nuclear localization signal element. Ser-237 carries the phosphoserine; by CK2 modification. Low complexity predominate over residues 255–264 (PSSPHASPTH). Phosphoserine; by CDK1 is present on residues Ser-257, Ser-261, and Ser-265. Positions 265-281 (SPRENGIDKNRLLKKDA) are enriched in basic and acidic residues. The segment at 267–450 (RENGIDKNRL…GGKPAYSFHV (184 aa)) is SP domain. A compositionally biased stretch (low complexity) spans 282–297 (SGSPASTASSGSSSSL). At Ser-284 the chain carries Phosphoserine. Residues 298–308 (KSKEVSLHEKA) are compositionally biased toward basic and acidic residues. WD repeat units lie at residues 470–501 (GIPR…HVYT), 528–558 (NRDN…SIWD), 572–602 (SSAP…AVWD), 614–644 (GHTD…RSWD), 696–726 (LHES…NAWR), and 737–767 (KESS…TVYE).

Belongs to the WD repeat Groucho/TLE family. Homooligomer and heterooligomer with other family members. Binds RUNX1, RUNX3, FOXA2, KDM6A, UTY, histone H3, HESX1, ESRRG and the NF-kappa-B subunit RELA. Interacts with HES1 (via WRPW motif). Binds TCF7, LEF1, TCF7L1 and TCF7L2. Interacts with SIX3. Interacts with EFNB1. Interacts with TLE4. Interacts with FOXG1/BF-1; the interaction is inhibited by TLE6/GRG6. Phosphorylated, probably by CDK1. The degree of phosphorylation varies throughout the cell cycle, and is highest at the G2/M transition. Becomes hyperphosphorylated in response to cell differentiation and interaction with HES1 or RUNX1. In terms of processing, ubiquitinated by XIAP/BIRC4. Highly expressed in liver and lung. Detected at slightly lower levels in heart, brain, kidney and testis. Detected in fetal and adult stomach and small intestine, in adult ileum, duodenum and colon. Expressed in bone marrow-derived macrophages. As to expression, most abundant at the base of the crypts of Lieberkuhn in the small intestine.

The protein resides in the nucleus. The protein localises to the cytoplasm. Transcriptional corepressor that binds to a number of transcription factors. Inhibits NF-kappa-B-regulated gene expression. Inhibits the transcriptional activation mediated by FOXA2, and by CTNNB1 and TCF family members in Wnt signaling. Enhances FOXG1/BF-1- and HES1-mediated transcriptional repression. The effects of full-length TLE family members may be modulated by association with dominant-negative AES. Unusual function as coactivator for ESRRG. The polypeptide is Transducin-like enhancer protein 1 (Tle1) (Mus musculus (Mouse)).